Here is a 584-residue protein sequence, read N- to C-terminus: Arginine--tRNA ligase (584 aa).

The short motif at 129–139 is the 'HIGH' region element; the sequence is ANPTGPLHVGH.

It belongs to the class-I aminoacyl-tRNA synthetase family. In terms of assembly, monomer.

It localises to the cytoplasm. The enzyme catalyses tRNA(Arg) + L-arginine + ATP = L-arginyl-tRNA(Arg) + AMP + diphosphate. The protein is Arginine--tRNA ligase of Halorhodospira halophila (strain DSM 244 / SL1) (Ectothiorhodospira halophila (strain DSM 244 / SL1)).